The sequence spans 213 residues: Probable nicotinate-nucleotide adenylyltransferase (213 aa).

It belongs to the NadD family.

It carries out the reaction nicotinate beta-D-ribonucleotide + ATP + H(+) = deamido-NAD(+) + diphosphate. It functions in the pathway cofactor biosynthesis; NAD(+) biosynthesis; deamido-NAD(+) from nicotinate D-ribonucleotide: step 1/1. Catalyzes the reversible adenylation of nicotinate mononucleotide (NaMN) to nicotinic acid adenine dinucleotide (NaAD). The chain is Probable nicotinate-nucleotide adenylyltransferase from Escherichia coli O45:K1 (strain S88 / ExPEC).